The following is a 311-amino-acid chain: Small ribosomal subunit biogenesis GTPase RsgA (311 aa).

The CP-type G domain maps to 88–246 (SKEKEQVIAA…VIDTPGIREF (159 aa)). Residues 137–140 (NKID) and 188–196 (GHSGVGKST) each bind GTP. Residues C270, C275, H277, and C283 each contribute to the Zn(2+) site.

It belongs to the TRAFAC class YlqF/YawG GTPase family. RsgA subfamily. Monomer. Associates with 30S ribosomal subunit, binds 16S rRNA. Zn(2+) serves as cofactor.

It localises to the cytoplasm. Its function is as follows. One of several proteins that assist in the late maturation steps of the functional core of the 30S ribosomal subunit. Helps release RbfA from mature subunits. May play a role in the assembly of ribosomal proteins into the subunit. Circularly permuted GTPase that catalyzes slow GTP hydrolysis, GTPase activity is stimulated by the 30S ribosomal subunit. This chain is Small ribosomal subunit biogenesis GTPase RsgA, found in Chlorobaculum parvum (strain DSM 263 / NCIMB 8327) (Chlorobium vibrioforme subsp. thiosulfatophilum).